The primary structure comprises 1121 residues: Anillin (1121 aa).

N-acetylmethionine is present on methionine 1. Positions 1–25 (MDPFTEKLLERTRARRENLQRKMAE) are enriched in basic and acidic residues. The interval 1-45 (MDPFTEKLLERTRARRENLQRKMAERPTAVARSAPHAKRGREPLS) is required for ubiquitination. 3 disordered regions span residues 1-113 (MDPF…AAIS), 125-196 (ADRG…PVGR), and 212-402 (DDVS…TKAI). The tract at residues 1–154 (MDPFTEKLLE…MQRLAEQRRH (154 aa)) is interaction with CD2AP. Residues 1-228 (MDPFTEKLLE…AKQNSVQEQP (228 aa)) are nuclear localization. Phosphoserine occurs at positions 73 and 96. Residues 96–109 (SPMPAPRQAKPPAP) show a composition bias toward pro residues. Over residues 130–143 (NSGSEASATSSVKT) the composition is skewed to polar residues. A compositionally biased stretch (basic and acidic residues) spans 147 to 157 (RLAEQRRHWDS). Serine 180 is subject to Phosphoserine. Position 192 is a phosphothreonine (threonine 192). Positions 216 to 228 (HSSAKQNSVQEQP) are enriched in polar residues. 3 positions are modified to phosphoserine: serine 223, serine 250, and serine 259. The tract at residues 229-671 (GTACLSKSSS…RDLLYSIDAY (443 aa)) is interaction with F-actin. Positions 234 to 250 (SKSSSASGASASINSSS) are enriched in low complexity. The span at 282-298 (SASVSSSVKASSPVTAA) shows a compositional bias: low complexity. A compositionally biased stretch (basic and acidic residues) spans 303–314 (ENREAQNPELLH). Threonine 316 is modified (phosphothreonine). A phosphoserine mark is found at serine 318 and serine 334. Phosphothreonine is present on threonine 359. Position 366 is an N6-acetyllysine (lysine 366). The span at 368-384 (FLERFGERCQEHSKESP) shows a compositional bias: basic and acidic residues. The span at 391 to 401 (KTPNITPNTKA) shows a compositional bias: polar residues. 2 positions are modified to phosphothreonine: threonine 392 and threonine 396. 2 positions are modified to phosphoserine: serine 414 and serine 444. The disordered stretch occupies residues 490–511 (NEPAVKLSSTEPAGSTESEMTK). A compositionally biased stretch (polar residues) spans 496-511 (LSSTEPAGSTESEMTK). Phosphoserine occurs at positions 513, 548, and 556. Residues 564–599 (FSDVLEEGELDVEKSQEEMDQVGAENSEEQEDALNI) are a coiled coil. Residues 623–635 (SPPSELRDSNLSA) show a composition bias toward polar residues. A disordered region spans residues 623 to 656 (SPPSELRDSNLSAASPKPGKFQRTRVPRAESADS). Residues serine 637, serine 653, serine 656, and serine 659 each carry the phosphoserine modification. A Phosphotyrosine modification is found at tyrosine 666. Serine 673, serine 683, serine 787, and serine 924 each carry phosphoserine. The localization to the cleavage furrow stretch occupies residues 725-1121 (QQTVIYQASQ…DACYKPVGKP (397 aa)). The region spanning 980–1104 (AVEEKGFLTI…WMQKLNQVIV (125 aa)) is the PH domain.

Interacts with F-actin. Interacts with CD2AP. May interact with RHOA. Interacts with FZR1/CDH1 during mitotic exit. Phosphorylated during mitosis. Post-translationally, ubiquitinated, and this requires FZR1/CDH1.

It localises to the nucleus. The protein resides in the cytoplasm. Its subcellular location is the cytoskeleton. It is found in the cell cortex. The protein localises to the cell projection. It localises to the bleb. Its function is as follows. Required for cytokinesis. Essential for the structural integrity of the cleavage furrow and for completion of cleavage furrow ingression. Plays a role in bleb assembly during metaphase and anaphase of mitosis. May play a significant role in podocyte cell migration. The protein is Anillin (Anln) of Mus musculus (Mouse).